An 81-amino-acid polypeptide reads, in one-letter code: Small ribosomal subunit protein bS16 (81 aa).

Belongs to the bacterial ribosomal protein bS16 family.

This is Small ribosomal subunit protein bS16 from Caldicellulosiruptor bescii (strain ATCC BAA-1888 / DSM 6725 / KCTC 15123 / Z-1320) (Anaerocellum thermophilum).